Consider the following 160-residue polypeptide: uncharacterized protein (160 aa).

One can recognise an N-acetyltransferase domain in the interval leucine 7–aspartate 151.

This is an uncharacterized protein from Bacillus subtilis (strain 168).